The following is a 225-amino-acid chain: UPF0758 protein Swoo_4561 (225 aa).

Positions 102–224 (ILSDPDLTRD…IVSFAERGWI (123 aa)) constitute an MPN domain. Zn(2+)-binding residues include histidine 173, histidine 175, and aspartate 186. A JAMM motif motif is present at residues 173 to 186 (HNHPSGVAEPSHAD).

Belongs to the UPF0758 family.

The polypeptide is UPF0758 protein Swoo_4561 (Shewanella woodyi (strain ATCC 51908 / MS32)).